Here is a 61-residue protein sequence, read N- to C-terminus: Small ribosomal subunit protein uS14 (61 aa).

Positions 24, 27, 40, and 43 each coordinate Zn(2+).

This sequence belongs to the universal ribosomal protein uS14 family. Zinc-binding uS14 subfamily. In terms of assembly, part of the 30S ribosomal subunit. Contacts proteins S3 and S10. It depends on Zn(2+) as a cofactor.

Functionally, binds 16S rRNA, required for the assembly of 30S particles and may also be responsible for determining the conformation of the 16S rRNA at the A site. The chain is Small ribosomal subunit protein uS14 from Nitratiruptor sp. (strain SB155-2).